Consider the following 392-residue polypeptide: B2 bradykinin receptor (392 aa).

The Extracellular portion of the chain corresponds to 1–61; the sequence is MPCSWKLLGF…EWWSWLNAIQ (61 aa). N29 and N40 each carry an N-linked (GlcNAc...) asparagine glycan. A helical membrane pass occupies residues 62 to 85; the sequence is APFLWVLFLLAALENLFVLSVFFL. At 86-94 the chain is on the cytoplasmic side; sequence HKNSCTVAE. A helical transmembrane segment spans residues 95-119; that stretch reads IYLGNLAAADLILACGLPFWAITIA. Residues 120 to 132 are Extracellular-facing; sequence NNFDWVFGEVLCR. A disulfide bond links C131 and C212. The chain crosses the membrane as a helical span at residues 133–154; that stretch reads VVNTMIYMNLYSSICFLMLVSI. At 155–176 the chain is on the cytoplasmic side; sequence DRYLALVKTMSMGRMRGVRWAK. Y157 carries the post-translational modification Phosphotyrosine. Residues 177 to 199 traverse the membrane as a helical segment; sequence LYSLVIWGCTLLLSSPMLVFRTM. Residues 200–222 lie on the Extracellular side of the membrane; the sequence is REYSEEGHNVTACVIVYPSRSWE. An N-linked (GlcNAc...) asparagine glycan is attached at N208. Residues 223-249 form a helical membrane-spanning segment; that stretch reads VFTNVLLNLVGFLLPLSVITFCTVRIL. The Cytoplasmic portion of the chain corresponds to 250–268; sequence QVLRNNEMKKFKEVQTERK. The chain crosses the membrane as a helical span at residues 269–293; the sequence is ATVLVLAVLGLFVLCWVPFQISTFL. At 294 to 312 the chain is on the extracellular side; it reads DTLLRLGVLSGCWDEHAVD. The chain crosses the membrane as a helical span at residues 313–336; it reads VITQISSYVAYSNSGLNPLVYVIV. At 337 to 392 the chain is on the cytoplasmic side; that stretch reads GKRFRKKSREVYRVLCQKGGCMGEPVQMENSMGTLRTSISVERQIHKLQDWAGKKQ. Y348 carries the phosphotyrosine modification. C352 carries S-palmitoyl cysteine lipidation. The residue at position 367 (S367) is a Phosphoserine. T370 is modified (phosphothreonine). 2 positions are modified to phosphoserine; by GRK6: S374 and S376.

Belongs to the G-protein coupled receptor 1 family. Bradykinin receptor subfamily. BDKRB2 sub-subfamily. As to quaternary structure, forms a complex with PECAM1 and GNAQ. Interacts with PECAM1.

The protein localises to the cell membrane. In terms of biological role, receptor for bradykinin. It is associated with G proteins that activate a phosphatidylinositol-calcium second messenger system. The chain is B2 bradykinin receptor (Bdkrb2) from Mus musculus (Mouse).